The sequence spans 619 residues: Chaperone protein DnaK (619 aa).

T179 is modified (phosphothreonine; by autocatalysis). The disordered stretch occupies residues 584–619 (QAKAQGAAGPQPGAQAQGQPNDGGKEDVVEAEVVDK). A compositionally biased stretch (low complexity) spans 585-605 (AKAQGAAGPQPGAQAQGQPND). The segment covering 606-619 (GGKEDVVEAEVVDK) has biased composition (basic and acidic residues).

The protein belongs to the heat shock protein 70 family.

Its function is as follows. Acts as a chaperone. The sequence is that of Chaperone protein DnaK from Elusimicrobium minutum (strain Pei191).